The primary structure comprises 553 residues: Rhodopsin kinase GRK7 (553 aa).

S36 is modified (phosphoserine; by PKA). Residues 56–176 (FHSLCEQQPI…VTSAFYDKFL (121 aa)) form the RGS domain. The 264-residue stretch at 191–454 (FTEFRVLGKG…SDDPRKHHFF (264 aa)) folds into the Protein kinase domain. ATP-binding positions include 197 to 205 (LGKGGFGEV) and K220. D316 serves as the catalytic Proton acceptor. Residues 455 to 520 (KTINFPRLEA…GAVPIAWQEE (66 aa)) form the AGC-kinase C-terminal domain. C550 bears the Cysteine methyl ester mark. The S-geranylgeranyl cysteine moiety is linked to residue C550. The propeptide at 551–553 (LLL) is removed in mature form.

Belongs to the protein kinase superfamily. AGC Ser/Thr protein kinase family. GPRK subfamily. In terms of assembly, interacts (when prenylated) with PDE6D; this promotes release from membranes. Autophosphorylated in vitro at Ser-490. Phosphorylation at Ser-36 is regulated by light and activated by cAMP. Retinal cones, outer and inner segments.

The protein resides in the membrane. It catalyses the reaction L-threonyl-[rhodopsin] + ATP = O-phospho-L-threonyl-[rhodopsin] + ADP + H(+). The enzyme catalyses L-seryl-[rhodopsin] + ATP = O-phospho-L-seryl-[rhodopsin] + ADP + H(+). Its activity is regulated as follows. Inhibited by phosphorylation of Ser-36. In terms of biological role, retina-specific kinase involved in the shutoff of the photoresponse and adaptation to changing light conditions via cone opsin phosphorylation, including rhodopsin (RHO). The sequence is that of Rhodopsin kinase GRK7 (GRK7) from Homo sapiens (Human).